Consider the following 162-residue polypeptide: Transcriptional regulator MraZ (162 aa).

SpoVT-AbrB domains follow at residues 11–62 (EHPS…GLSV) and 98–141 (AVEC…SRDT).

Belongs to the MraZ family. In terms of assembly, forms oligomers.

It localises to the cytoplasm. The protein localises to the nucleoid. This chain is Transcriptional regulator MraZ, found in Pelobacter propionicus (strain DSM 2379 / NBRC 103807 / OttBd1).